A 365-amino-acid chain; its full sequence is Probable dual-specificity RNA methyltransferase RlmN (365 aa).

Glutamate 99 (proton acceptor) is an active-site residue. The region spanning 105–344 (QSYGLSVCVT…CVVRQEHGTD (240 aa)) is the Radical SAM core domain. Residues cysteine 112 and cysteine 349 are joined by a disulfide bond. The [4Fe-4S] cluster site is built by cysteine 119, cysteine 123, and cysteine 126. S-adenosyl-L-methionine-binding positions include 171 to 172 (GE), serine 203, 227 to 229 (SLH), and asparagine 305. Catalysis depends on cysteine 349, which acts as the S-methylcysteine intermediate.

This sequence belongs to the radical SAM superfamily. RlmN family. The cofactor is [4Fe-4S] cluster.

It localises to the cytoplasm. The enzyme catalyses adenosine(2503) in 23S rRNA + 2 reduced [2Fe-2S]-[ferredoxin] + 2 S-adenosyl-L-methionine = 2-methyladenosine(2503) in 23S rRNA + 5'-deoxyadenosine + L-methionine + 2 oxidized [2Fe-2S]-[ferredoxin] + S-adenosyl-L-homocysteine. It catalyses the reaction adenosine(37) in tRNA + 2 reduced [2Fe-2S]-[ferredoxin] + 2 S-adenosyl-L-methionine = 2-methyladenosine(37) in tRNA + 5'-deoxyadenosine + L-methionine + 2 oxidized [2Fe-2S]-[ferredoxin] + S-adenosyl-L-homocysteine. In terms of biological role, specifically methylates position 2 of adenine 2503 in 23S rRNA and position 2 of adenine 37 in tRNAs. The chain is Probable dual-specificity RNA methyltransferase RlmN from Lactococcus lactis subsp. cremoris (strain MG1363).